The following is a 261-amino-acid chain: Small ribosomal subunit protein mS23 (261 aa).

Positions 233-261 (RASSPSASWTNETEEEQKPIDQDVEEIQL) are disordered.

The protein belongs to the mitochondrion-specific ribosomal protein mS23 family. As to quaternary structure, component of the mitochondrial small ribosomal subunit.

It is found in the mitochondrion. The sequence is that of Small ribosomal subunit protein mS23 (RSM25) from Kluyveromyces lactis (strain ATCC 8585 / CBS 2359 / DSM 70799 / NBRC 1267 / NRRL Y-1140 / WM37) (Yeast).